We begin with the raw amino-acid sequence, 573 residues long: Myrcene synthase TPS5FN (573 aa).

Residues Arg286, Asp323, Asp327, Arg464, and Asp467 each coordinate (2E)-geranyl diphosphate. Mg(2+) is bound by residues Asp323 and Asp327. Positions Asp323–Asp327 match the DDXXD motif motif. Mg(2+)-binding residues include Asp467, Thr471, and Glu475.

This sequence belongs to the terpene synthase family. Tpsb subfamily. Mg(2+) serves as cofactor. Mn(2+) is required as a cofactor. As to expression, expressed in glandular trichomes two to four weeks after flowering onset.

It carries out the reaction (2E)-geranyl diphosphate = beta-myrcene + diphosphate. The enzyme catalyses (2E)-geranyl diphosphate = (1R,5R)-alpha-pinene + diphosphate. It catalyses the reaction (2E)-geranyl diphosphate = sabinene + diphosphate. The catalysed reaction is (2E)-geranyl diphosphate = (4S)-limonene + diphosphate. It carries out the reaction (2E)-geranyl diphosphate = terpinolene + diphosphate. The enzyme catalyses (2E)-geranyl diphosphate = camphene + diphosphate. Its pathway is secondary metabolite biosynthesis; terpenoid biosynthesis. Its function is as follows. Involved in monoterpene (C10) olefins biosynthesis, constituants of cannabinoids and terpenoids-rich resins. Catalyzes mainly the conversion of (2E)-geranyl diphosphate to beta-myrcene, and also produces minor products such as alpha-pinene, camphene, sabinene, limonene and terpinolene. The protein is Myrcene synthase TPS5FN of Cannabis sativa (Hemp).